The chain runs to 186 residues: Ribosome-recycling factor (186 aa).

This sequence belongs to the RRF family.

The protein localises to the cytoplasm. Its function is as follows. Responsible for the release of ribosomes from messenger RNA at the termination of protein biosynthesis. May increase the efficiency of translation by recycling ribosomes from one round of translation to another. In Ralstonia nicotianae (strain ATCC BAA-1114 / GMI1000) (Ralstonia solanacearum), this protein is Ribosome-recycling factor.